Here is a 248-residue protein sequence, read N- to C-terminus: Granzyme E (248 aa).

The signal sequence occupies residues 1-18 (MPPVLILLTLLLPLGAGA). Residues 19–20 (EE) constitute a propeptide that is removed on maturation. The Peptidase S1 domain maps to 21 to 246 (IIGGHVVKPH…FLPWISRNMK (226 aa)). Cys-50 and Cys-66 are joined by a disulfide. Catalysis depends on His-65, which acts as the Charge relay system. Asn-68 and Asn-102 each carry an N-linked (GlcNAc...) asparagine glycan. The active-site Charge relay system is the Asp-109. 2 disulfide bridges follow: Cys-143-Cys-210 and Cys-175-Cys-189. Asn-154 is a glycosylation site (N-linked (GlcNAc...) asparagine). Ser-204 (charge relay system) is an active-site residue. N-linked (GlcNAc...) asparagine glycosylation occurs at Asn-223.

It belongs to the peptidase S1 family. Granzyme subfamily.

It is found in the cytolytic granule. Its function is as follows. This enzyme is probably necessary for target cell lysis in cell-mediated immune responses. The chain is Granzyme E (Gzme) from Mus musculus (Mouse).